Here is a 673-residue protein sequence, read N- to C-terminus: UvrABC system protein B (673 aa).

Residues 26 to 414 form the Helicase ATP-binding domain; sequence EGLEDGLAHQ…GGDVVDQVVR (389 aa). Residue 39 to 46 coordinates ATP; that stretch reads GVTGSGKT. The Beta-hairpin motif lies at 92–115; it reads YYDYYQPEAYVPSSDTFIEKDASV. Residues 431–597 enclose the Helicase C-terminal domain; it reads QVDDLLSEIR…GLNKKVVDIL (167 aa). Residues 633–668 form the UVR domain; that stretch reads QQKIHELEGLMMQHAQNLEFEEAAQIRDQLHQLREL.

This sequence belongs to the UvrB family. Forms a heterotetramer with UvrA during the search for lesions. Interacts with UvrC in an incision complex.

Its subcellular location is the cytoplasm. Functionally, the UvrABC repair system catalyzes the recognition and processing of DNA lesions. A damage recognition complex composed of 2 UvrA and 2 UvrB subunits scans DNA for abnormalities. Upon binding of the UvrA(2)B(2) complex to a putative damaged site, the DNA wraps around one UvrB monomer. DNA wrap is dependent on ATP binding by UvrB and probably causes local melting of the DNA helix, facilitating insertion of UvrB beta-hairpin between the DNA strands. Then UvrB probes one DNA strand for the presence of a lesion. If a lesion is found the UvrA subunits dissociate and the UvrB-DNA preincision complex is formed. This complex is subsequently bound by UvrC and the second UvrB is released. If no lesion is found, the DNA wraps around the other UvrB subunit that will check the other stand for damage. The polypeptide is UvrABC system protein B (Shigella flexneri).